A 509-amino-acid chain; its full sequence is Ceramide glucosyltransferase (509 aa).

At 1 to 42 (MIMQLGLTSLAFLALKCDAYNIAPKIDTPNVEPFAPSGGLKL) the chain is on the lumenal side. The chain crosses the membrane as a helical span at residues 43-63 (LAIVAIIWYVVVLLVAYYGFF). Residues 64-384 (EIMQKFSKRK…EATLLEPTTE (321 aa)) are Cytoplasmic-facing. A short sequence motif (D1) is located at residue Asp-123. A short sequence motif (D2) is located at residue Asp-179. Asp-321 is a short sequence motif (D3). The active-site Proton acceptor is Asp-321. A (Q/R)XXRW motif is present at residues 361 to 365 (RRIRW). A helical membrane pass occupies residues 385–405 (CLLCGTFGTFAISTLFLQSYF). The Lumenal portion of the chain corresponds to 406 to 408 (NWK). Residues 409 to 429 (FFIFHLLVWMVTDYTQFHILL) form a helical membrane-spanning segment. Residues 430–466 (TNASQDTATCNVPYFAEPNFNAYGSPFESSNLRTFHR) lie on the Cytoplasmic side of the membrane. A helical transmembrane segment spans residues 467 to 487 (WVLYWLLREVLALPIWISAML). Residues 488-509 (GTRIIWRNRPFRINVDLSAEEL) lie on the Lumenal side of the membrane.

Belongs to the glycosyltransferase 2 family.

The protein localises to the golgi apparatus membrane. The enzyme catalyses an N-acylsphing-4-enine + UDP-alpha-D-glucose = a beta-D-glucosyl-(1&lt;-&gt;1')-N-acylsphing-4-enine + UDP + H(+). It participates in lipid metabolism; sphingolipid metabolism. In terms of biological role, catalyzes the final step in the biosynthesis of the membrane lipid glucosylceramide (GluCer), the transfer of glucose to ceramide. Glucosylceramides play important roles in growth, differentiation and pathogenicity. This Komagataella phaffii (strain GS115 / ATCC 20864) (Yeast) protein is Ceramide glucosyltransferase.